Reading from the N-terminus, the 311-residue chain is Pyrimidine-specific ribonucleoside hydrolase RihA (311 aa).

H240 is an active-site residue.

This sequence belongs to the IUNH family. RihA subfamily.

Its function is as follows. Hydrolyzes with equal efficiency cytidine or uridine to ribose and cytosine or uracil, respectively. The protein is Pyrimidine-specific ribonucleoside hydrolase RihA of Escherichia coli O81 (strain ED1a).